A 521-amino-acid polypeptide reads, in one-letter code: Endoplasmic reticulum mannosyl-oligosaccharide 1,2-alpha-mannosidase (521 aa).

At 1-8 (MVKRRTVK) the chain is on the cytoplasmic side. A helical; Signal-anchor for type II membrane protein transmembrane segment spans residues 9 to 31 (YFLRRILALFVLCVPIYYLYTTV). Residues 32-521 (QRPPGYTKLK…IENNMDLYTV (490 aa)) lie on the Lumenal side of the membrane. Asn-114, Asn-167, Asn-300, Asn-342, and Asn-378 each carry an N-linked (GlcNAc...) asparagine glycan. Cys-330 and Cys-373 are oxidised to a cystine. Glu-387 functions as the Proton donor in the catalytic mechanism. A glycan (N-linked (GlcNAc...) asparagine) is linked at Asn-499. Residue Thr-504 coordinates Ca(2+).

Belongs to the glycosyl hydrolase 47 family. It depends on Ca(2+) as a cofactor.

It localises to the membrane. The enzyme catalyses N(4)-(alpha-D-Man-(1-&gt;2)-alpha-D-Man-(1-&gt;2)-alpha-D-Man-(1-&gt;3)-[alpha-D-Man-(1-&gt;2)-alpha-D-Man-(1-&gt;3)-[alpha-D-Man-(1-&gt;2)-alpha-D-Man-(1-&gt;6)]-alpha-D-Man-(1-&gt;6)]-beta-D-Man-(1-&gt;4)-beta-D-GlcNAc-(1-&gt;4)-beta-D-GlcNAc)-L-asparaginyl-[protein] (N-glucan mannose isomer 9A1,2,3B1,2,3) + 4 H2O = N(4)-(alpha-D-Man-(1-&gt;3)-[alpha-D-Man-(1-&gt;3)-[alpha-D-Man-(1-&gt;6)]-alpha-D-Man-(1-&gt;6)]-beta-D-Man-(1-&gt;4)-beta-D-GlcNAc-(1-&gt;4)-beta-D-GlcNAc)-L-asparaginyl-[protein] (N-glucan mannose isomer 5A1,2) + 4 beta-D-mannose. It catalyses the reaction N(4)-(alpha-D-Man-(1-&gt;2)-alpha-D-Man-(1-&gt;2)-alpha-D-Man-(1-&gt;3)-[alpha-D-Man-(1-&gt;3)-[alpha-D-Man-(1-&gt;2)-alpha-D-Man-(1-&gt;6)]-alpha-D-Man-(1-&gt;6)]-beta-D-Man-(1-&gt;4)-beta-D-GlcNAc-(1-&gt;4)-beta-D-GlcNAc)-L-asparaginyl-[protein] (N-glucan mannose isomer 8A1,2,3B1,3) + 3 H2O = N(4)-(alpha-D-Man-(1-&gt;3)-[alpha-D-Man-(1-&gt;3)-[alpha-D-Man-(1-&gt;6)]-alpha-D-Man-(1-&gt;6)]-beta-D-Man-(1-&gt;4)-beta-D-GlcNAc-(1-&gt;4)-beta-D-GlcNAc)-L-asparaginyl-[protein] (N-glucan mannose isomer 5A1,2) + 3 beta-D-mannose. Its pathway is protein modification; protein glycosylation. With respect to regulation, inhibited by kifunensine. Functionally, involved in glycoprotein quality control as it is important for the targeting of misfolded glycoproteins for degradation. It trims a single alpha-1,2-linked mannose residue from Man(9)GlcNAc(2) to produce Man(8)GlcNAc(2) with low efficiency. The polypeptide is Endoplasmic reticulum mannosyl-oligosaccharide 1,2-alpha-mannosidase (Schizosaccharomyces pombe (strain 972 / ATCC 24843) (Fission yeast)).